Reading from the N-terminus, the 567-residue chain is Hydrogenase-2 large chain (567 aa).

4 residues coordinate Ni(2+): Cys-61, Cys-64, Cys-546, and Cys-549. Positions 553–567 are excised as a propeptide; the sequence is VVDADGNEVVSVKVL.

It belongs to the [NiFe]/[NiFeSe] hydrogenase large subunit family. As to quaternary structure, heterodimer of a large and a small subunit. The cofactor is Ni(2+).

The protein localises to the cell membrane. It carries out the reaction H2 + A = AH2. Functionally, this is one of three E.coli hydrogenases synthesized in response to different physiological conditions. HYD2 is involved in hydrogen uptake. The chain is Hydrogenase-2 large chain (hybC) from Escherichia coli O157:H7.